A 396-amino-acid chain; its full sequence is Phosphoglycerate kinase (396 aa).

Substrate is bound by residues Asp21–Asn23, Arg36, His59–Lys62, Arg119, and Arg156. ATP contacts are provided by residues Lys206, Glu325, and Gly352 to Ser355.

It belongs to the phosphoglycerate kinase family. Monomer.

It localises to the cytoplasm. It carries out the reaction (2R)-3-phosphoglycerate + ATP = (2R)-3-phospho-glyceroyl phosphate + ADP. It functions in the pathway carbohydrate degradation; glycolysis; pyruvate from D-glyceraldehyde 3-phosphate: step 2/5. This Staphylococcus saprophyticus subsp. saprophyticus (strain ATCC 15305 / DSM 20229 / NCIMB 8711 / NCTC 7292 / S-41) protein is Phosphoglycerate kinase.